Here is a 600-residue protein sequence, read N- to C-terminus: Glutamine--fructose-6-phosphate aminotransferase [isomerizing] (600 aa).

Catalysis depends on cysteine 2, which acts as the Nucleophile; for GATase activity. Residues 2-217 enclose the Glutamine amidotransferase type-2 domain; the sequence is CGIVGYIGQL…DKEMVIVTDK (216 aa). 2 consecutive SIS domains span residues 283-422 and 452-590; these read ISNA…SRGK and IARE…VDKP. Lysine 595 functions as the For Fru-6P isomerization activity in the catalytic mechanism.

As to quaternary structure, homodimer.

The protein resides in the cytoplasm. It catalyses the reaction D-fructose 6-phosphate + L-glutamine = D-glucosamine 6-phosphate + L-glutamate. In terms of biological role, catalyzes the first step in hexosamine metabolism, converting fructose-6P into glucosamine-6P using glutamine as a nitrogen source. The chain is Glutamine--fructose-6-phosphate aminotransferase [isomerizing] from Bacillus licheniformis (strain ATCC 14580 / DSM 13 / JCM 2505 / CCUG 7422 / NBRC 12200 / NCIMB 9375 / NCTC 10341 / NRRL NRS-1264 / Gibson 46).